The following is a 179-amino-acid chain: M-phase-specific PLK1-interacting protein (179 aa).

Residues 1–135 (MQRQNFRPPT…RVREKRMSNE (135 aa)) form a disordered region. Position 37 is an asymmetric dimethylarginine (Arg37). Ser40 and Ser47 each carry phosphoserine. Residue Thr51 is modified to Phosphothreonine. Arg57 is subject to Omega-N-methylarginine. Asymmetric dimethylarginine is present on residues Arg59 and Arg68. Residues 60–71 (PYGSSHSPRHGG) are compositionally biased toward low complexity. Ser72 carries the post-translational modification Phosphoserine. Arg77 is modified (asymmetric dimethylarginine). Residues 79 to 109 (GSPSPGGYPGSYSRSPAGSQQQFGYSPGQQQ) show a composition bias toward low complexity. Residues Ser80, Ser82, Ser93, Ser104, and Ser115 each carry the phosphoserine modification. Residues 110–122 (THPQGSPRTSTPF) are compositionally biased toward polar residues. Arg117 carries the post-translational modification Omega-N-methylarginine. The residue at position 120 (Thr120) is a Phosphothreonine. Residues Ser124 and Ser133 each carry the phosphoserine modification.

As to quaternary structure, interacts with PLK1; phosphorylation-dependent. Phosphorylated during mitosis in the cell cycle probably by CDK1. As to expression, expressed at highest levels in liver and kidney; intermediate expression in skeletal muscle, pancreas, heart and placenta; low expression in brain and lung. Expressed in epidermis and hair follicles.

The protein resides in the nucleus. It localises to the cytoplasm. Its subcellular location is the cytoskeleton. It is found in the microtubule organizing center. The protein localises to the centrosome. May play a role in maintenance of cell cycle integrity by regulating mitosis or cytokinesis. This Homo sapiens (Human) protein is M-phase-specific PLK1-interacting protein (MPLKIP).